The chain runs to 244 residues: GTP cyclohydrolase 1 type 2 homolog (244 aa).

Histidine 65, histidine 66, aspartate 102, histidine 216, and glutamate 220 together coordinate a divalent metal cation.

It belongs to the GTP cyclohydrolase I type 2/NIF3 family. As to quaternary structure, homohexamer; trimer of dimers, that forms a hollow cage-like architecture.

Functionally, DNA-binding protein exhibiting the ability to bind to both single-stranded and double-stranded DNA. The chain is GTP cyclohydrolase 1 type 2 homolog from Methanocaldococcus jannaschii (strain ATCC 43067 / DSM 2661 / JAL-1 / JCM 10045 / NBRC 100440) (Methanococcus jannaschii).